A 308-amino-acid chain; its full sequence is Cytochrome b (308 aa).

Helical transmembrane passes span 1–21, 45–66, 81–101, and 146–166; these read FGLL…LLAA, WLIR…YLHI, WNIG…GYVL, and FFAL…VHLT. The heme b site is built by histidine 51 and histidine 65. Residues histidine 150 and histidine 164 each contribute to the heme b site. Histidine 169 lines the a ubiquinone pocket. 3 helical membrane passes run 194-214, 256-276, and 288-308; these read TKDM…ALFS, LGGV…PLLH, and LSQI…WVGS.

It belongs to the cytochrome b family. The cytochrome bc1 complex contains 11 subunits: 3 respiratory subunits (MT-CYB, CYC1 and UQCRFS1), 2 core proteins (UQCRC1 and UQCRC2) and 6 low-molecular weight proteins (UQCRH/QCR6, UQCRB/QCR7, UQCRQ/QCR8, UQCR10/QCR9, UQCR11/QCR10 and a cleavage product of UQCRFS1). This cytochrome bc1 complex then forms a dimer. Heme b serves as cofactor.

It localises to the mitochondrion inner membrane. In terms of biological role, component of the ubiquinol-cytochrome c reductase complex (complex III or cytochrome b-c1 complex) that is part of the mitochondrial respiratory chain. The b-c1 complex mediates electron transfer from ubiquinol to cytochrome c. Contributes to the generation of a proton gradient across the mitochondrial membrane that is then used for ATP synthesis. The sequence is that of Cytochrome b (MT-CYB) from Pomatostomus temporalis (Grey-crowned babbler).